A 249-amino-acid polypeptide reads, in one-letter code: Indole-3-glycerol phosphate synthase (249 aa).

Belongs to the TrpC family.

The catalysed reaction is 1-(2-carboxyphenylamino)-1-deoxy-D-ribulose 5-phosphate + H(+) = (1S,2R)-1-C-(indol-3-yl)glycerol 3-phosphate + CO2 + H2O. The protein operates within amino-acid biosynthesis; L-tryptophan biosynthesis; L-tryptophan from chorismate: step 4/5. In Pyrobaculum arsenaticum (strain DSM 13514 / JCM 11321 / PZ6), this protein is Indole-3-glycerol phosphate synthase.